The sequence spans 83 residues: Exodeoxyribonuclease 7 small subunit (83 aa).

It belongs to the XseB family. In terms of assembly, heterooligomer composed of large and small subunits.

The protein localises to the cytoplasm. It carries out the reaction Exonucleolytic cleavage in either 5'- to 3'- or 3'- to 5'-direction to yield nucleoside 5'-phosphates.. Bidirectionally degrades single-stranded DNA into large acid-insoluble oligonucleotides, which are then degraded further into small acid-soluble oligonucleotides. This is Exodeoxyribonuclease 7 small subunit from Nitrobacter winogradskyi (strain ATCC 25391 / DSM 10237 / CIP 104748 / NCIMB 11846 / Nb-255).